Here is a 179-residue protein sequence, read N- to C-terminus: Inner membrane-spanning protein YciB (179 aa).

Helical transmembrane passes span 3–23 (FLFD…ADIY), 24–44 (TATA…WFRH), 49–69 (PMQW…LVLH), 76–96 (WKPT…VIGW), 121–141 (AAWA…AYQF), and 149–169 (FKLF…SVWL).

This sequence belongs to the YciB family.

The protein localises to the cell inner membrane. Its function is as follows. Plays a role in cell envelope biogenesis, maintenance of cell envelope integrity and membrane homeostasis. This is Inner membrane-spanning protein YciB from Cupriavidus necator (strain ATCC 17699 / DSM 428 / KCTC 22496 / NCIMB 10442 / H16 / Stanier 337) (Ralstonia eutropha).